The sequence spans 158 residues: Transcription elongation factor GreA (158 aa).

Belongs to the GreA/GreB family.

In terms of biological role, necessary for efficient RNA polymerase transcription elongation past template-encoded arresting sites. The arresting sites in DNA have the property of trapping a certain fraction of elongating RNA polymerases that pass through, resulting in locked ternary complexes. Cleavage of the nascent transcript by cleavage factors such as GreA or GreB allows the resumption of elongation from the new 3'terminus. GreA releases sequences of 2 to 3 nucleotides. This is Transcription elongation factor GreA from Salmonella typhi.